Here is a 661-residue protein sequence, read N- to C-terminus: Kininogen-1 (661 aa).

An N-terminal signal peptide occupies residues 1 to 20 (MKLITTLLLCSGLLLTLTQG). The Cystatin kininogen-type 1 domain maps to 28-131 (CNDEAVFQAV…TQTCKIAPSK (104 aa)). Intrachain disulfides connect C28-C631, C83-C94, C107-C125, C141-C144, C205-C217, C228-C247, C263-C266, C327-C339, and C350-C369. N82 is a glycosylation site (N-linked (GlcNAc...) asparagine). Positions 150-253 (TDSPDLEPVL…SQSCTLYSGD (104 aa)) constitute a Cystatin kininogen-type 2 domain. Residues N168 and N204 are each glycosylated (N-linked (GlcNAc...) asparagine). Residue N242 is glycosylated (N-linked (GlcNAc...) asparagine). The 104-residue stretch at 272–375 (VDSPELKEVL…TVKCQALDMT (104 aa)) folds into the Cystatin kininogen-type 3 domain. Phosphoserine is present on S331. 3 disordered regions span residues 405–471 (YIAR…LGHG), 485–583 (DGDD…FQDS), and 626–661 (ATSPKCPGRPWKPASWEDPNTETTEFSDFDLLDALS). Composition is skewed to basic residues over residues 434–471 (KANKNHRGHKHGHDHGHWSPRRHGLGHGHQKPHGLGHG) and 492–526 (TVGHGHGHGHGHGHGHGHGHGHGHGHGHGHGHGKH). Residues 541–555 (TESLASSSEYSTTST) are compositionally biased toward low complexity. Acidic residues predominate over residues 650–661 (EFSDFDLLDALS).

In terms of assembly, isoform LMW interacts with CRISP3. In terms of processing, bradykinin is released from kininogen by plasma kallikrein. Phosphorylated by FAM20C in the extracellular medium. Post-translationally, bradykinin is inactivated by ACE, which removes the dipeptide Arg-Phe from its C-terminus. As to expression, plasma.

The protein localises to the secreted. It localises to the extracellular space. Its function is as follows. Kininogens are inhibitors of thiol proteases. HMW-kininogen plays an important role in blood coagulation by helping to position optimally prekallikrein and factor XI next to factor XII; HMW-kininogen inhibits the thrombin- and plasmin-induced aggregation of thrombocytes. LMW-kininogen inhibits the aggregation of thrombocytes. LMW-kininogen is in contrast to HMW-kininogen not involved in blood clotting. The active peptide bradykinin is a potent vasodilatator that is released from HMW-kininogen shows a variety of physiological effects: (A) influence in smooth muscle contraction, (B) induction of hypotension, (C) natriuresis and diuresis, (D) decrease in blood glucose level, (E) it is a mediator of inflammation and causes (E1) increase in vascular permeability, (E2) stimulation of nociceptors (4E3) release of other mediators of inflammation (e.g. prostaglandins), (F) it has a cardioprotective effect (directly via bradykinin action, indirectly via endothelium-derived relaxing factor action). The protein is Kininogen-1 (Kng1) of Mus musculus (Mouse).